Here is a 103-residue protein sequence, read N- to C-terminus: Pyrimidine/purine nucleoside phosphorylase (103 aa).

Belongs to the nucleoside phosphorylase PpnP family.

The catalysed reaction is a purine D-ribonucleoside + phosphate = a purine nucleobase + alpha-D-ribose 1-phosphate. The enzyme catalyses adenosine + phosphate = alpha-D-ribose 1-phosphate + adenine. It catalyses the reaction cytidine + phosphate = cytosine + alpha-D-ribose 1-phosphate. It carries out the reaction guanosine + phosphate = alpha-D-ribose 1-phosphate + guanine. The catalysed reaction is inosine + phosphate = alpha-D-ribose 1-phosphate + hypoxanthine. The enzyme catalyses thymidine + phosphate = 2-deoxy-alpha-D-ribose 1-phosphate + thymine. It catalyses the reaction uridine + phosphate = alpha-D-ribose 1-phosphate + uracil. It carries out the reaction xanthosine + phosphate = alpha-D-ribose 1-phosphate + xanthine. Its function is as follows. Catalyzes the phosphorolysis of diverse nucleosides, yielding D-ribose 1-phosphate and the respective free bases. Can use uridine, adenosine, guanosine, cytidine, thymidine, inosine and xanthosine as substrates. Also catalyzes the reverse reactions. In Sulfurovum sp. (strain NBC37-1), this protein is Pyrimidine/purine nucleoside phosphorylase.